The chain runs to 268 residues: Glucosamine-6-phosphate deaminase (268 aa).

Asp72 (proton acceptor; for enolization step) is an active-site residue. Catalysis depends on Asp141, which acts as the For ring-opening step. His143 functions as the Proton acceptor; for ring-opening step in the catalytic mechanism. The For ring-opening step role is filled by Glu148.

The protein belongs to the glucosamine/galactosamine-6-phosphate isomerase family. NagB subfamily. As to quaternary structure, homohexamer.

It carries out the reaction alpha-D-glucosamine 6-phosphate + H2O = beta-D-fructose 6-phosphate + NH4(+). Its pathway is amino-sugar metabolism; N-acetylneuraminate degradation; D-fructose 6-phosphate from N-acetylneuraminate: step 5/5. Allosterically activated by N-acetylglucosamine 6-phosphate (GlcNAc6P). In terms of biological role, catalyzes the reversible isomerization-deamination of glucosamine 6-phosphate (GlcN6P) to form fructose 6-phosphate (Fru6P) and ammonium ion. The chain is Glucosamine-6-phosphate deaminase from Histophilus somni (strain 2336) (Haemophilus somnus).